Here is a 195-residue protein sequence, read N- to C-terminus: Probable GTP-binding protein EngB (195 aa).

The EngB-type G domain occupies 24-195 (ELPEIALAGR…EAWDAILEKL (172 aa)). Residues 32–39 (GRSNVGKS), 59–63 (GKTQL), 77–80 (DVPG), 144–147 (TKAD), and 176–178 (FSS) contribute to the GTP site. Mg(2+) contacts are provided by Ser-39 and Thr-61.

The protein belongs to the TRAFAC class TrmE-Era-EngA-EngB-Septin-like GTPase superfamily. EngB GTPase family. Mg(2+) serves as cofactor.

Functionally, necessary for normal cell division and for the maintenance of normal septation. This is Probable GTP-binding protein EngB from Streptococcus pneumoniae serotype 4 (strain ATCC BAA-334 / TIGR4).